The sequence spans 855 residues: Pre-mRNA-splicing factor SYF1 (855 aa).

9 HAT repeats span residues 15-47, 48-80, 90-122, 124-158, 160-192, 198-230, 235-268, 270-305, and 369-407; these read LVFEEEDLPYEEEIMRNQFSVKCWLRYIEFKQG, APKPRLNQLYERALKLLPCSYKLWYRYLKARRA, PAYEDVNNCHERAFVFMHKMPRLWLDYCQFLMD, GRVTHTRRTFDRALRALPITQHSRIWPLYLRFLRS, PLPETAVRGYRRFLKLSPESAEEYIEYLKSSDR, QRLATVVNDERFVSKAGKSNYQLWHELCDLISQ, VQSLNVDAIIRGGLTRFTDQLGKLWCSLADYYIR, GHFEKARDVYEEAIRTVMTVRDFTQVFDSYAQFEES, and GRPREIINTYTEAVQTVDPFKATGKPHTLWVAFAKFYED. Residue Lys-420 is modified to N6-acetyllysine. HAT repeat units lie at residues 498 to 530, 532 to 566, 571 to 605, 643 to 677, and 679 to 713; these read GTFQSTKAVYDRILDLRIATPQIVINYAMFLEE, KYFEESFKAYERGISLFKWPNVSDIWSTYLTKFIA, RKLERARDLFEQALDGCPPKYAKTLYLLYAQLEEE, YGVTHTRGIYQKAIEVLSDEHAREMCLRFADMECK, and GEIDRARAIYSFCSQICDPRTTGAFWQTWKDFEVR. A disordered region spans residues 810–855; that stretch reads LAQQVNPEEIQLGEDEDEDEMDLEPNEVRLEQQSVPAAVFGSLKED. The segment covering 820–834 has biased composition (acidic residues); sequence QLGEDEDEDEMDLEP. Residue Ser-851 is modified to Phosphoserine.

The protein belongs to the crooked-neck family. As to quaternary structure, associates with RNA polymerase II, the TCR-specific proteins CKN1/CSA and ERCC6/CSB, and XPA. Identified in the spliceosome C complex. Component of the XAB2 complex, a multimeric protein complex composed of XAB2, PRPF19, AQR, ZNF830, ISY1, and PPIE. Identified in a pentameric intron-binding (IB) complex composed of AQR, XAB2, ISY1, ZNF830 and PPIE that is incorporated into the spliceosome as a preassembled complex. The IB complex does not contain PRPF19.

It localises to the nucleus. Involved in pre-mRNA splicing as component of the spliceosome. Involved in transcription-coupled repair (TCR), transcription and pre-mRNA splicing. This Homo sapiens (Human) protein is Pre-mRNA-splicing factor SYF1 (XAB2).